Consider the following 308-residue polypeptide: ADP-L-glycero-D-manno-heptose-6-epimerase (308 aa).

NADP(+) is bound by residues 10-11 (FI), 31-32 (DN), Lys-38, Lys-53, 75-79 (EGACS), and Asn-92. The Proton acceptor role is filled by Tyr-139. Lys-143 contributes to the NADP(+) binding site. Asn-168 serves as a coordination point for substrate. 2 residues coordinate NADP(+): Val-169 and Lys-177. The active-site Proton acceptor is Lys-177. Substrate-binding positions include Ser-179, His-186, 200-203 (FAGS), Arg-208, and Tyr-271.

Belongs to the NAD(P)-dependent epimerase/dehydratase family. HldD subfamily. In terms of assembly, homopentamer. It depends on NADP(+) as a cofactor.

The enzyme catalyses ADP-D-glycero-beta-D-manno-heptose = ADP-L-glycero-beta-D-manno-heptose. The protein operates within nucleotide-sugar biosynthesis; ADP-L-glycero-beta-D-manno-heptose biosynthesis; ADP-L-glycero-beta-D-manno-heptose from D-glycero-beta-D-manno-heptose 7-phosphate: step 4/4. Its function is as follows. Catalyzes the interconversion between ADP-D-glycero-beta-D-manno-heptose and ADP-L-glycero-beta-D-manno-heptose via an epimerization at carbon 6 of the heptose. This is ADP-L-glycero-D-manno-heptose-6-epimerase from Haemophilus influenzae (strain 86-028NP).